Consider the following 491-residue polypeptide: Glycogen synthase 1 (491 aa).

Lysine 15 serves as a coordination point for ADP-alpha-D-glucose.

It belongs to the glycosyltransferase 1 family. Bacterial/plant glycogen synthase subfamily.

It catalyses the reaction [(1-&gt;4)-alpha-D-glucosyl](n) + ADP-alpha-D-glucose = [(1-&gt;4)-alpha-D-glucosyl](n+1) + ADP + H(+). Its pathway is glycan biosynthesis; glycogen biosynthesis. Functionally, synthesizes alpha-1,4-glucan chains using ADP-glucose. This is Glycogen synthase 1 from Synechococcus sp. (strain JA-3-3Ab) (Cyanobacteria bacterium Yellowstone A-Prime).